A 139-amino-acid polypeptide reads, in one-letter code: Histone H2A (139 aa).

Residues 1–27 (MSGKGKAGKSGGKAGSETKSMSRSSKA) are disordered. Ser-2 is modified (N-acetylserine). An N6-acetyllysine mark is found at Lys-9 and Lys-13. Polar residues predominate over residues 17–27 (ETKSMSRSSKA). Gln-110 is modified (N5-methylglutamine). Residues 119–139 (PELLPSKSSKGKKDEGVSQEL) are disordered. Residues 129-139 (GKKDEGVSQEL) show a composition bias toward basic and acidic residues. Ser-136 is modified (phosphoserine). The [ST]-Q motif motif lies at 136–137 (SQ).

It belongs to the histone H2A family. In terms of assembly, the nucleosome is a histone octamer containing two molecules each of H2A, H2B, H3 and H4 assembled in one H3-H4 heterotetramer and two H2A-H2B heterodimers. The octamer wraps approximately 147 bp of DNA. In terms of processing, phosphorylated to form H2AS128ph (gamma-H2A) in response to DNA double-strand breaks (DSBs) generated by exogenous genotoxic agents and by stalled replication forks. Phosphorylation is dependent on the DNA damage checkpoint kinases MEC1/ATR and TEL1/ATM, spreads on either side of a detected DSB site and may mark the surrounding chromatin for recruitment of proteins required for DNA damage signaling and repair. Gamma-H2A is removed from the DNA prior to the strand invasion-primer extension step of the repair process and subsequently dephosphorylated. Dephosphorylation is necessary for efficient recovery from the DNA damage checkpoint. Acetylated by ESA1 to form H2AK4ac and H2AK7ac.

The protein resides in the nucleus. It is found in the chromosome. Its function is as follows. Core component of nucleosome which plays a central role in DNA double strand break (DSB) repair. Nucleosomes wrap and compact DNA into chromatin, limiting DNA accessibility to the cellular machineries which require DNA as a template. Histones thereby play a central role in transcription regulation, DNA repair, DNA replication and chromosomal stability. DNA accessibility is regulated via a complex set of post-translational modifications of histones, also called histone code, and nucleosome remodeling. This is Histone H2A from Agaricus bisporus (White button mushroom).